Reading from the N-terminus, the 364-residue chain is Ribosomal RNA large subunit methyltransferase M (364 aa).

S-adenosyl-L-methionine is bound by residues Ser187, 220-223 (CPGG), Asp239, Asp259, and Asp276. The active-site Proton acceptor is the Lys305.

This sequence belongs to the class I-like SAM-binding methyltransferase superfamily. RNA methyltransferase RlmE family. RlmM subfamily. Monomer.

It is found in the cytoplasm. The enzyme catalyses cytidine(2498) in 23S rRNA + S-adenosyl-L-methionine = 2'-O-methylcytidine(2498) in 23S rRNA + S-adenosyl-L-homocysteine + H(+). In terms of biological role, catalyzes the 2'-O-methylation at nucleotide C2498 in 23S rRNA. This is Ribosomal RNA large subunit methyltransferase M from Aeromonas salmonicida (strain A449).